The chain runs to 304 residues: ATP phosphoribosyltransferase (304 aa).

It belongs to the ATP phosphoribosyltransferase family. Long subfamily. It depends on Mg(2+) as a cofactor.

It is found in the cytoplasm. It carries out the reaction 1-(5-phospho-beta-D-ribosyl)-ATP + diphosphate = 5-phospho-alpha-D-ribose 1-diphosphate + ATP. Its pathway is amino-acid biosynthesis; L-histidine biosynthesis; L-histidine from 5-phospho-alpha-D-ribose 1-diphosphate: step 1/9. Feedback inhibited by histidine. Catalyzes the condensation of ATP and 5-phosphoribose 1-diphosphate to form N'-(5'-phosphoribosyl)-ATP (PR-ATP). Has a crucial role in the pathway because the rate of histidine biosynthesis seems to be controlled primarily by regulation of HisG enzymatic activity. The sequence is that of ATP phosphoribosyltransferase from Xylella fastidiosa (strain M12).